Here is a 422-residue protein sequence, read N- to C-terminus: GTPase Obg (422 aa).

One can recognise an Obg domain in the interval 1-158 (MFYDRARIFV…RWLDLELKLL (158 aa)). The region spanning 159–329 (ADVGLVGFPN…LVYRVSALLE (171 aa)) is the OBG-type G domain. GTP is bound by residues 165 to 172 (GFPNAGKS), 190 to 194 (FTTIT), 212 to 215 (DIPG), 282 to 285 (NKMD), and 310 to 312 (SAV). Mg(2+) contacts are provided by Ser-172 and Thr-192. The OCT domain occupies 337 to 422 (VPEALERPVI…IGDYEFEYVE (86 aa)).

This sequence belongs to the TRAFAC class OBG-HflX-like GTPase superfamily. OBG GTPase family. In terms of assembly, monomer. Requires Mg(2+) as cofactor.

It localises to the cytoplasm. Functionally, an essential GTPase which binds GTP, GDP and possibly (p)ppGpp with moderate affinity, with high nucleotide exchange rates and a fairly low GTP hydrolysis rate. Plays a role in control of the cell cycle, stress response, ribosome biogenesis and in those bacteria that undergo differentiation, in morphogenesis control. The sequence is that of GTPase Obg from Pelotomaculum thermopropionicum (strain DSM 13744 / JCM 10971 / SI).